The sequence spans 369 residues: Caffeine synthase 1 (369 aa).

Y24 is a binding site for S-adenosyl-L-homocysteine. Residue T31 coordinates caffeine. 6 residues coordinate S-adenosyl-L-homocysteine: C66, N71, D103, L104, S138, and F139. Caffeine is bound by residues Y156, H159, and W160. N177 is a binding site for Mg(2+). R225 contributes to the caffeine binding site. D263, F265, and N266 together coordinate Mg(2+). Caffeine is bound at residue F321.

This sequence belongs to the methyltransferase superfamily. Type-7 methyltransferase family. It depends on Mg(2+) as a cofactor.

The enzyme catalyses theobromine + S-adenosyl-L-methionine = caffeine + S-adenosyl-L-homocysteine + H(+). It carries out the reaction 7-methylxanthine + S-adenosyl-L-methionine = theobromine + S-adenosyl-L-homocysteine + H(+). Its pathway is alkaloid biosynthesis. In terms of biological role, involved in the biosynthesis of caffeine. Catalyzes the conversion of 7-methylxanthine (7mX) to theobromine and of theobromine to caffeine. This Camellia crassicolumna (Evergreen tea) protein is Caffeine synthase 1.